The chain runs to 184 residues: MKNVTDSFVFLGHWPSAGSFGFNTDILATNPINLSVVLGVLIFFGKGVLSDLLDNRKQRILNTIRNSEELRDGAIEQLEKARARLRKVEMEAEQFRVNGYSEIEREKWNLINSTSKTLEQLENYKNETIQFEQQRAINQVRQRVFQQALQGAIGTLNSCLSNELHLRTINANIGMFGAMKEITD.

A helical membrane pass occupies residues 27-49; that stretch reads LATNPINLSVVLGVLIFFGKGVL.

Belongs to the ATPase B chain family. As to quaternary structure, F-type ATPases have 2 components, F(1) - the catalytic core - and F(0) - the membrane proton channel. F(1) has five subunits: alpha(3), beta(3), gamma(1), delta(1), epsilon(1). F(0) has four main subunits: a(1), b(1), b'(1) and c(10-14). The alpha and beta chains form an alternating ring which encloses part of the gamma chain. F(1) is attached to F(0) by a central stalk formed by the gamma and epsilon chains, while a peripheral stalk is formed by the delta, b and b' chains.

It localises to the plastid. The protein resides in the chloroplast thylakoid membrane. Functionally, f(1)F(0) ATP synthase produces ATP from ADP in the presence of a proton or sodium gradient. F-type ATPases consist of two structural domains, F(1) containing the extramembraneous catalytic core and F(0) containing the membrane proton channel, linked together by a central stalk and a peripheral stalk. During catalysis, ATP synthesis in the catalytic domain of F(1) is coupled via a rotary mechanism of the central stalk subunits to proton translocation. Component of the F(0) channel, it forms part of the peripheral stalk, linking F(1) to F(0). In Carica papaya (Papaya), this protein is ATP synthase subunit b, chloroplastic.